The chain runs to 375 residues: Growth/differentiation factor 8 (375 aa).

An N-terminal signal peptide occupies residues 1–18 (MQKLQISVYIYLFMLIVA). Positions 19–266 (GPVDLNENSE…VTDTPKRSRR (248 aa)) are excised as a propeptide. N-linked (GlcNAc...) asparagine glycans are attached at residues Asn47 and Asn71. Disulfide bonds link Cys272/Cys282, Cys281/Cys340, Cys309/Cys372, and Cys313/Cys374.

It belongs to the TGF-beta family. As to quaternary structure, homodimer; disulfide-linked. Interacts with WFIKKN2, leading to inhibit its activity. Interacts with FSTL3. In terms of processing, synthesized as large precursor molecule that undergoes proteolytic cleavage to generate an N-terminal propeptide and a disulfide linked C-terminal dimer, which is the biologically active molecule. The circulating form consists of a latent complex of the C-terminal dimer and other proteins, including its propeptide, which maintain the C-terminal dimer in a latent, inactive state. Ligand activation requires additional cleavage of the prodomain by a tolloid-like metalloproteinase.

The protein resides in the secreted. Functionally, acts specifically as a negative regulator of skeletal muscle growth. This is Growth/differentiation factor 8 (MSTN) from Bos gaurus (Seladang).